The following is a 349-amino-acid chain: Rhodopsin (349 aa).

Topologically, residues 1–33 are extracellular; the sequence is TEGPYFYIPMSNATGVVRSPYEYPQYYLVYPAA. Residue Asn12 is glycosylated (N-linked (GlcNAc...) asparagine). The chain crosses the membrane as a helical span at residues 34–58; it reads FAVLGAYMFFLIIFGFPVNFLTLYV. Over 59 to 70 the chain is Cytoplasmic; sequence TIEHKKLRTPLN. A helical membrane pass occupies residues 71–93; it reads YILLNLAVADLFMVIGGFTTTIY. Over 94–107 the chain is Extracellular; the sequence is TSMHGYFVLGRLGC. A disulfide bridge links Cys107 with Cys184. The chain crosses the membrane as a helical span at residues 108–130; sequence NLEGFSATLGGMISLWSLVVLAV. The 'Ionic lock' involved in activated form stabilization motif lies at 131–133; sequence ERW. Over 131–149 the chain is Cytoplasmic; it reads ERWVVVCKPMSNFRFGENH. Residues 150 to 170 traverse the membrane as a helical segment; sequence AIMGVTLTWAMGLACTVPPLV. The Extracellular segment spans residues 171 to 199; that stretch reads GWSRYIPEGMQCSCGIDYYTRAEGFNNES. Asn197 carries N-linked (GlcNAc...) asparagine glycosylation. The helical transmembrane segment at 200 to 221 threads the bilayer; that stretch reads FVLYMFVCHFSFPLVVIFFCYG. Topologically, residues 222 to 249 are cytoplasmic; sequence RLLCAVKEAAAAQQESETTQRAEREVTR. A helical membrane pass occupies residues 250–271; the sequence is MVILMVIGFLVCWLPYASVAWY. The Extracellular portion of the chain corresponds to 272-283; sequence IFTHQGSEFGPL. The chain crosses the membrane as a helical span at residues 284–305; the sequence is FMTIPAFFAKSSAIYNPVIYIC. N6-(retinylidene)lysine is present on Lys293. Residues 306–349 are Cytoplasmic-facing; the sequence is LNKQFRQCMLTTLFCGKNPFEEEEGASSTKTEASSASSSSVSPA. Cys320 is lipidated: S-palmitoyl cysteine. The segment at 326–349 is disordered; that stretch reads EEEEGASSTKTEASSASSSSVSPA. A compositionally biased stretch (low complexity) spans 331 to 349; the sequence is ASSTKTEASSASSSSVSPA.

Belongs to the G-protein coupled receptor 1 family. Opsin subfamily. Post-translationally, phosphorylated on some or all of the serine and threonine residues present in the C-terminal region. In terms of processing, contains one covalently linked retinal chromophore.

It is found in the membrane. Its subcellular location is the cell projection. The protein localises to the cilium. The protein resides in the photoreceptor outer segment. Photoreceptor required for image-forming vision at low light intensity. While most salt water fish species use retinal as chromophore, most freshwater fish use 3-dehydroretinal, or a mixture of retinal and 3-dehydroretinal. Light-induced isomerization of 11-cis to all-trans retinal triggers a conformational change that activates signaling via G-proteins. Subsequent receptor phosphorylation mediates displacement of the bound G-protein alpha subunit by arrestin and terminates signaling. This chain is Rhodopsin (rho), found in Myripristis berndti (Bigscale soldierfish).